The sequence spans 407 residues: Phosphopentomutase (407 aa).

Mn(2+)-binding residues include Asp10, Asp306, His311, Asp347, His348, and His359.

The protein belongs to the phosphopentomutase family. Mn(2+) is required as a cofactor.

Its subcellular location is the cytoplasm. The catalysed reaction is 2-deoxy-alpha-D-ribose 1-phosphate = 2-deoxy-D-ribose 5-phosphate. It catalyses the reaction alpha-D-ribose 1-phosphate = D-ribose 5-phosphate. It functions in the pathway carbohydrate degradation; 2-deoxy-D-ribose 1-phosphate degradation; D-glyceraldehyde 3-phosphate and acetaldehyde from 2-deoxy-alpha-D-ribose 1-phosphate: step 1/2. Isomerase that catalyzes the conversion of deoxy-ribose 1-phosphate (dRib-1-P) and ribose 1-phosphate (Rib-1-P) to deoxy-ribose 5-phosphate (dRib-5-P) and ribose 5-phosphate (Rib-5-P), respectively. The protein is Phosphopentomutase of Salmonella schwarzengrund (strain CVM19633).